Consider the following 643-residue polypeptide: SURP and G-patch domain-containing protein 1 (643 aa).

Disordered stretches follow at residues 48 to 69 (ARME…HPGE) and 97 to 119 (KAQT…SSLK). Threonine 128 is subject to Phosphothreonine. The SURP motif 1 repeat unit spans residues 187 to 229 (VIEKLARFVAEGGPELEKVAMEDYKDNPAFTFLHDKNSREFLY). Position 252 is a phosphoserine (serine 252). One copy of the SURP motif 2 repeat lies at 262 to 305 (LAEKLARFIADGGPEVETIALQNNRENQAFSFLYDPNSQGYRYY). Disordered regions lie at residues 316-335 (KAGS…LRRK) and 360-393 (AVNP…DKVE). Phosphoserine is present on serine 322. The short motif at 378–384 (KRKRKSR) is the Nuclear localization signal element. Residues serine 407, serine 409, serine 412, and serine 483 each carry the phosphoserine modification. The G-patch domain maps to 560–607 (VENIGYQMLMKMGWKEGEGLGTEGQGIKNPVNKGATTIDGAGFGIDRP).

In terms of assembly, component of the spliceosome.

It is found in the nucleus. Functionally, plays a role in pre-mRNA splicing. This is SURP and G-patch domain-containing protein 1 (Sugp1) from Mus musculus (Mouse).